The primary structure comprises 561 residues: Cytochrome P450 monooxygenase avaL (561 aa).

A helical transmembrane segment spans residues 19–39 (IAASCALVCIVSACYVVWSLL). Residue cysteine 508 coordinates heme.

The protein belongs to the cytochrome P450 family. Requires heme as cofactor.

Its subcellular location is the membrane. It functions in the pathway secondary metabolite biosynthesis. In terms of biological role, cytochrome P450 monooxygenase; part of the cluster that mediates the biosynthesis of a highly modified cyclo-arginine-tryptophan dipeptide (cRW). The first step of the pathway is perfornmed by the arginine-containing cyclodipeptide synthase (RCPDS) avaA that acts as the scaffold-generating enzyme and is responsible for formation of the cyclo-Arg-Trp (cRW) diketopiperazine. AvaB then acts as a multifunctional flavoenzyme that is responsible for generating the cyclo-Arg-formylkynurenine DKP, which can be deformylated by avaC. AvaB then further catalyzes an additional N-oxidation followed by cyclization and dehydration. The next step is an N-acetylation of the guanidine group catalyzed by the arginine N-acetyltransferase avaD. The roles of the additional enzymes identified within the ava cluster still have to be determined. The chain is Cytochrome P450 monooxygenase avaL from Aspergillus versicolor.